We begin with the raw amino-acid sequence, 144 residues long: Large ribosomal subunit protein uL15 (144 aa).

Residues M1–G52 form a disordered region. Residues R21–G31 are compositionally biased toward gly residues.

The protein belongs to the universal ribosomal protein uL15 family. As to quaternary structure, part of the 50S ribosomal subunit.

Its function is as follows. Binds to the 23S rRNA. The chain is Large ribosomal subunit protein uL15 from Haemophilus ducreyi (strain 35000HP / ATCC 700724).